The primary structure comprises 187 residues: Elongation factor P (187 aa).

This sequence belongs to the elongation factor P family.

The protein resides in the cytoplasm. Its pathway is protein biosynthesis; polypeptide chain elongation. In terms of biological role, involved in peptide bond synthesis. Stimulates efficient translation and peptide-bond synthesis on native or reconstituted 70S ribosomes in vitro. Probably functions indirectly by altering the affinity of the ribosome for aminoacyl-tRNA, thus increasing their reactivity as acceptors for peptidyl transferase. The chain is Elongation factor P from Helicobacter acinonychis (strain Sheeba).